Reading from the N-terminus, the 261-residue chain is MSDILDKIIAVKREEIAAALESAPLEELKVQASARDSRDFVGALRDKHAAGHAAVIAEVKKASPSKGVLREHFVPADIARSYAQHGAACLSVLTDERFFQGSARYLEQARAACTLPVLRKDFIVDAYQLLEARAMGADAILLIAAALDTPLMIDLEAYAHSLGLAVLVEVHNRGELDEALKLKTPFVGINNRNLRTFETTIDTTLGMLDAIPDDRIVVTESGILSRADVERMEAAGVHTFLVGEAFMRAENPGAELARMFF.

The protein belongs to the TrpC family.

The enzyme catalyses 1-(2-carboxyphenylamino)-1-deoxy-D-ribulose 5-phosphate + H(+) = (1S,2R)-1-C-(indol-3-yl)glycerol 3-phosphate + CO2 + H2O. It functions in the pathway amino-acid biosynthesis; L-tryptophan biosynthesis; L-tryptophan from chorismate: step 4/5. This chain is Indole-3-glycerol phosphate synthase, found in Burkholderia mallei (strain NCTC 10247).